Here is a 374-residue protein sequence, read N- to C-terminus: MSNSDKFFNDFKDIVENPKKYIMKHMEQTGQKAIGCMPLYTPEELVLAAGMFPVGVWGSNTELSKAKTYFPAFICSILQTTLENALNGEYDMLSGMMITNYCDSLKCMGQNFKLTVENIEFIPVTVPQNRKMEAGKEFLKSQYKMNIEQLEKISGNKITDESLEKAIEIYDEHRKVMNDFSMLASKYPGIITPTKRNYVMKSAYYMDKKEHTEKVRQLMDEIKAIEPKPFEGKRVITTGIIADSEDLLKILEENNIAIVGDDIAHESRQYRTLTPEANTPMDRLAEQFANRECSTLYDPEKKRGQYIVEMAKERKADGIIFFMTKFCDPEEYDYPQMKKDFEEAGIPHVLIETDMQMKNYEQARTAIQAFSETL.

The protein belongs to the FldB/FldC dehydratase alpha/beta subunit family. As to quaternary structure, part of the heterotrimeric phenyllactate dehydratase complex FldABC, composed of (R)-phenyllactate CoA-transferase (FldA) and a heterodimeric (R)-phenyllactyl-CoA dehydratase (FldB and FldC). It depends on [4Fe-4S] cluster as a cofactor. The cofactor is No flavin could be detected in the FldABC complex, and the addition of FAD, FMN or riboflavin to the dehydratase do not increase enzymatic activity..

The enzyme catalyses (R)-3-phenyllactoyl-CoA = (E)-cinnamoyl-CoA + H2O. It carries out the reaction (R)-3-(4-hydroxyphenyl)lactoyl-CoA = (E)-4-coumaroyl-CoA + H2O. It catalyses the reaction (R)-3-(indol-3-yl)lactoyl-CoA = (E)-3-(indol-3-yl)acryloyl-CoA + H2O. It participates in amino-acid degradation; L-phenylalanine degradation. Functionally, component of the phenyllactate dehydratase complex FldABC that is involved in the fermentation of L-phenylalanine via a Stickland reaction. This complex catalyzes the reversible syn-dehydration of (R)-phenyllactate to (E)-cinnamate in two steps, a CoA-transfer from cinnamoyl-CoA to phenyllactate, catalyzed by FldA, followed by the dehydration of phenyllactyl-CoA to cinnamoyl-CoA, catalyzed by FldB and FldC. Requires the activator FldI to initiate catalysis. This is (R)-phenyllactyl-CoA dehydratase beta subunit from Clostridium sporogenes.